The primary structure comprises 146 residues: Ninjurin-1 (146 aa).

The segment at 1–33 (MASEAMELNGGVNRRDDPGARPQQGRMSRNTPL) is disordered. Residues 1 to 75 (MASEAMELNG…ELGPSFSFYI (75 aa)) lie on the Extracellular side of the membrane. The tract at residues 37-66 (HYANKKSAAESMLDIALLMANASQLKTVLE) is required to induce plasma membrane rupture. The interval 41-52 (KKSAAESMLDIA) is helix alpha1. Residues 55–71 (MANASQLKTVLELGPSF) are helix alpha2. N57 is a glycosylation site (N-linked (GlcNAc...) asparagine). Residues 76–100 (PLITLISISLTLQIIVGILLIFIVK) traverse the membrane as a helical segment. Over 101–110 (WNLNDSSKHY) the chain is Cytoplasmic. The helical transmembrane segment at 111–135 (ILNLLENIVTALVFIVVVVNVFITA) threads the bilayer. At 136 to 146 (FGVQRPDDKTS) the chain is on the extracellular side.

Belongs to the ninjurin family. In terms of assembly, homooligomer; in response to death stimuli, homooligomerizes into long, highly branched filaments and large, ring-shaped structures in the membrane. As to quaternary structure, homodimer; in absence of death stimuli, forms an inactive homodimer. Homooligomer; in response to death stimuli, homooligomerizes into long, highly branched filaments and large, ring-shaped structures in the membrane.

Its subcellular location is the cell membrane. It is found in the synaptic cell membrane. In normal conditions, NINJ1 is inactivated. In response to death stimuli, homooligomerizes and disrupts membrane integrity by introducing the hydrophilic faces of alpha1 and alpha2 helices into the hydrophobic membrane. Homooligomerization and ability to mediate plasma membrane rupture is inhibited by glycine; it is unclear whether glycine directly or indirectly inhibits homooligomerization. With respect to regulation, in response to death stimuli, homooligomerizes and disrupts membrane integrity by introducing the hydrophilic faces of alpha1 and alpha2 helices into the hydrophobic membrane. Homooligomerization and ability to mediate plasma membrane rupture is inhibited by glycine; it is unclear whether glycine directly or indirectly inhibits homooligomerization. In normal conditions, NINJ1 is autoinhibited via formation of a homodimer: in the inactive homodimer, the alpha1 and alpha2 helices (residues 41-71) form a single transmembrane region without a kink, in which hydrophilic faces of alpha1 and alpha2 helices are sequestered. Effector of various programmed cell death, such as pyroptosis and necroptosis, which mediates plasma membrane rupture (cytolysis). Oligomerizes in response to death stimuli and forms ring-like structures on the plasma membrane: acts by cutting and shedding membrane disks, like a cookie cutter, leading to membrane damage and loss that cannot be repaired by the cell. Plasma membrane rupture leads to release intracellular molecules named damage-associated molecular patterns (DAMPs) that propagate the inflammatory response. Mechanistically, mediates plasma membrane rupture by introducing hydrophilic faces of 2 alpha helices into the hydrophobic membrane. Induces plasma membrane rupture downstream of Gasdermin (GSDMA, GSDMB, GSDMC, GSDMD, or GSDME) or MLKL during pyroptosis or necroptosis, respectively. Also acts as an effector of PANoptosis and ferroptosis. Induces plasma membrane rupture in response to cell swelling caused by osmotic stress. Acts as a regulator of Toll-like receptor 4 (TLR4) signaling triggered by lipopolysaccharide (LPS) during systemic inflammation; directly binds LPS. Involved in leukocyte migration during inflammation by promoting transendothelial migration of macrophages via homotypic binding. Promotes the migration of monocytes across the brain endothelium to central nervous system inflammatory lesions. Also acts as a homophilic transmembrane adhesion molecule involved in various processes such as axonal growth, cell chemotaxis and angiogenesis. Promotes cell adhesion by mediating homophilic interactions via its extracellular N-terminal adhesion motif (N-NAM). Also involved in striated muscle growth and differentiation. The sequence is that of Ninjurin-1 from Danio rerio (Zebrafish).